Here is a 472-residue protein sequence, read N- to C-terminus: 3-isopropylmalate dehydratase large subunit (472 aa).

[4Fe-4S] cluster-binding residues include cysteine 353, cysteine 414, and cysteine 417.

This sequence belongs to the aconitase/IPM isomerase family. LeuC type 1 subfamily. In terms of assembly, heterodimer of LeuC and LeuD. [4Fe-4S] cluster serves as cofactor.

It catalyses the reaction (2R,3S)-3-isopropylmalate = (2S)-2-isopropylmalate. Its pathway is amino-acid biosynthesis; L-leucine biosynthesis; L-leucine from 3-methyl-2-oxobutanoate: step 2/4. Its function is as follows. Catalyzes the isomerization between 2-isopropylmalate and 3-isopropylmalate, via the formation of 2-isopropylmaleate. The sequence is that of 3-isopropylmalate dehydratase large subunit from Acinetobacter baumannii (strain ACICU).